Here is a 358-residue protein sequence, read N- to C-terminus: Prostaglandin E2 receptor EP2 subtype (358 aa).

Residues 1–23 lie on the Extracellular side of the membrane; it reads MGNASNDSQSEDCETRQWLPPGE. Residues Asn3 and Asn6 are each glycosylated (N-linked (GlcNAc...) asparagine). A helical membrane pass occupies residues 24 to 47; it reads SPAISSVMFSAGVLGNLIALALLA. Residues 48–65 lie on the Cytoplasmic side of the membrane; that stretch reads RRWRGDVGCSAGRRSSLS. The chain crosses the membrane as a helical span at residues 66 to 91; it reads LFHVLVTELVFTDLLGTCLISPVVLA. At 92-111 the chain is on the extracellular side; sequence SYARNQTLVALAPESRACTY. Asn96 is a glycosylation site (N-linked (GlcNAc...) asparagine). A disulfide bridge connects residues Cys109 and Cys187. A helical membrane pass occupies residues 112-132; that stretch reads FAFAMTFFSLATMLMLFAMAL. At 133-151 the chain is on the cytoplasmic side; the sequence is ERYLSIGHPYFYQRRVSRS. The chain crosses the membrane as a helical span at residues 152 to 176; it reads GGLAVLPVIYAVSLLFCSLPLLDYG. At 177 to 198 the chain is on the extracellular side; sequence QYVQYCPGTWCFIRHGRTAYLQ. The chain crosses the membrane as a helical span at residues 199 to 223; sequence LYATLLLLLIVSVLACNFSVILNLI. At 224–262 the chain is on the cytoplasmic side; the sequence is RMHRRSRRSRCGPSLGSGRGGPGARRRGERVSMAEETDH. The interval 231-253 is disordered; sequence RSRCGPSLGSGRGGPGARRRGER. A helical membrane pass occupies residues 263–286; the sequence is LILLAIMTITFAVCSLPFTIFAYM. N-linked (GlcNAc...) asparagine glycosylation is present at Asn287. Residues 287–299 are Extracellular-facing; sequence NETSSRKEKWDLQ. Residues 300–323 traverse the membrane as a helical segment; it reads ALRFLSINSIIDPWVFAILRPPVL. At 324–358 the chain is on the cytoplasmic side; it reads RLMRSVLCCRISLRTQDATQTSCSTQSDASKQADL.

It belongs to the G-protein coupled receptor 1 family. In terms of tissue distribution, placenta and lung.

Its subcellular location is the cell membrane. Functionally, receptor for prostaglandin E2 (PGE2). The activity of this receptor is mediated by G(s) proteins that stimulate adenylate cyclase. The subsequent raise in intracellular cAMP is responsible for the relaxing effect of this receptor on smooth muscle. The sequence is that of Prostaglandin E2 receptor EP2 subtype (PTGER2) from Homo sapiens (Human).